Consider the following 644-residue polypeptide: DNA mismatch repair protein MutL (644 aa).

The tract at residues 363–405 (GTFNPFTDDKTNQHYTKAGSGSGSGYSSGSSSSSGSGSGSSYS) is disordered. The span at 389–405 (SSGSSSSSGSGSGSSYS) shows a compositional bias: low complexity.

The protein belongs to the DNA mismatch repair MutL/HexB family.

Its function is as follows. This protein is involved in the repair of mismatches in DNA. It is required for dam-dependent methyl-directed DNA mismatch repair. May act as a 'molecular matchmaker', a protein that promotes the formation of a stable complex between two or more DNA-binding proteins in an ATP-dependent manner without itself being part of a final effector complex. The sequence is that of DNA mismatch repair protein MutL from Flavobacterium johnsoniae (strain ATCC 17061 / DSM 2064 / JCM 8514 / BCRC 14874 / CCUG 350202 / NBRC 14942 / NCIMB 11054 / UW101) (Cytophaga johnsonae).